Reading from the N-terminus, the 101-residue chain is Apolipoprotein C-II (101 aa).

Positions 1–22 (MGTRCLLVLLLVLLVLKCEVQG) are cleaved as a signal peptide. A propeptide spans 23–28 (DDMARQ) (removed in mature form). The lipid binding stretch occupies residues 66-74 (AMDEKIRDM). Residues 78–101 (STAAVRIYTGILTDQILSMLTGDP) are lipoprotein lipase cofactor.

The protein belongs to the apolipoprotein C2 family. Post-translationally, proapolipoprotein C-II is synthesized as a sialic acid containing glycoprotein which is subsequently desialylated prior to its proteolytic processing. Proapolipoprotein C-II, the major form found in plasma undergoes proteolytic cleavage of its N-terminal hexapeptide to generate the mature form apolipoprotein C-II, which occurs as the minor form in plasma.

Its subcellular location is the secreted. In terms of biological role, component of chylomicrons, very low-density lipoproteins (VLDL), low-density lipoproteins (LDL), and high-density lipoproteins (HDL) in plasma. Plays an important role in lipoprotein metabolism as an activator of lipoprotein lipase, the enzyme which hydrolyzes the triacylglycerols on chylomicrons and VLDL. This Panthera tigris altaica (Siberian tiger) protein is Apolipoprotein C-II (APOC2).